The chain runs to 435 residues: MVVPNGEGDKTAAVVGLQFGDEGKGKITDYLSGSYDVVVRFNGGTNAGHTVVTDEGTFKFHLLPSGSLRTSYVVLGSGMVIDPVALIPEIEIVRKINPALKIIISRNAHVVTKMHRQIDVEEEKIRSSLMIGTTAQGIGPTYEDKYARTGIRMVDISDIDLIKEKIETMYRMHSNLLANTEFSNLAKREEMAKEIYEAGIKLTGYLDYTEVAIDRLYSQGKRILFEGAQGVFLDPDFGFYPFVTSSNTISASVYTGTGFSLRKVNRIIGVAKAYVSKVGEGPFPTEITGDLAKQLRDLGGEYGTTTGRPRRVGWLDLPMLKYAVRIDDVDEIAITKVDTLGMLDTVKVCRQYLIDGKPIDYVPRDMNTIKKIEPVYDEFEGWGAISDSISGRKISIDQLPSKLVKYIKYIEDQVGKPIGIISMGKERNRTVRIIK.

GTP is bound by residues 20–26 (GDEGKGK) and 48–50 (GHT). Asp21 serves as the catalytic Proton acceptor. Residues Asp21 and Gly48 each contribute to the Mg(2+) site. IMP-binding positions include 21-24 (DEGK), 46-49 (NAGH), Thr134, Arg148, Gln229, Thr244, and Arg308. Residue His49 is the Proton donor of the active site. Substrate is bound at residue 304–310 (TTTGRPR). GTP-binding positions include Arg310, 336–338 (KVD), and 422–424 (SMG).

The protein belongs to the adenylosuccinate synthetase family. Homodimer. Mg(2+) serves as cofactor.

The protein resides in the cytoplasm. The catalysed reaction is IMP + L-aspartate + GTP = N(6)-(1,2-dicarboxyethyl)-AMP + GDP + phosphate + 2 H(+). It functions in the pathway purine metabolism; AMP biosynthesis via de novo pathway; AMP from IMP: step 1/2. Its function is as follows. Plays an important role in the de novo pathway of purine nucleotide biosynthesis. Catalyzes the first committed step in the biosynthesis of AMP from IMP. The polypeptide is Adenylosuccinate synthetase (Thermoplasma acidophilum (strain ATCC 25905 / DSM 1728 / JCM 9062 / NBRC 15155 / AMRC-C165)).